We begin with the raw amino-acid sequence, 445 residues long: Fasciclin-like arabinogalactan protein 16 (445 aa).

The first 23 residues, 1-23, serve as a signal peptide directing secretion; sequence MDSSYGATKFLLLLFLTTSIATA. FAS1 domains are found at residues 35 to 173 and 257 to 400; these read NSNS…ERLL and VKDF…DGVL. N-linked (GlcNAc...) asparagine glycans are attached at residues N72 and N279.

The protein belongs to the fasciclin-like AGP family.

The protein localises to the secreted. In terms of biological role, may be a cell surface adhesion protein. The protein is Fasciclin-like arabinogalactan protein 16 (FLA16) of Arabidopsis thaliana (Mouse-ear cress).